Reading from the N-terminus, the 361-residue chain is MNDDSNGRRRRPAAFPVGTEDATSRELEQTPRRAPGSFSDKIVMTPDADDPFIETTAAIEALNPPEARPPRRRLSFGKIAAGAFGILISLAVGLWVDRLVRDLFSRADWLGYGAVAVVAIGAAAFLIVVAREIFGMMQLTAVQALKADLAAAAVAGKAQAARAATARLVHLLAGNPRTAKGRARLADTEGEIIDAPHLVDLTERELLAPLDREARRIILGAAKRVSIVTAVSPRALVDLGYVLYESARMIRAMAELYGGRPGTLGLLRLMRDVVAHLAVTGSIAVGDSLVQQILGHGLASKLSARLGEGVINGLMTARIGIAAMDLCRPMPFRALKRPSIGDFLADLAPGAGRTESATGKA.

Positions 1-40 (MNDDSNGRRRRPAAFPVGTEDATSRELEQTPRRAPGSFSD) are disordered. The span at 22-31 (ATSRELEQTP) shows a compositional bias: basic and acidic residues. A run of 2 helical transmembrane segments spans residues 76-96 (FGKIAAGAFGILISLAVGLWV) and 109-129 (WLGYGAVAVVAIGAAAFLIVV).

The protein belongs to the UPF0283 family.

The protein resides in the cell inner membrane. This is UPF0283 membrane protein Smed_1530 from Sinorhizobium medicae (strain WSM419) (Ensifer medicae).